A 306-amino-acid polypeptide reads, in one-letter code: MLKGRHLIDAMDFSIEELEEIFKLSNEIISREKEFSHICEGKLLATLFYEPSTRTRLSFESAMLRLGGKVMGFSEPGSSSASKGESIADTIRVISCYADIAAMRHPKEGAPKIAAMYSNIPVINAGDGGHQHPTQTLTDLLTVKSIKGRLSNLKIGCCGDLKFGRTVHSLIKAMSRYENNSFTLISPEELKIPNYLKKELNSKNVKYEETKNLEDSIESLDILYMTRVQRERFFNEEDYIRLKDSYILDKGKISRAAKDMIVLHPLPRVNEISYEIDKDPRAYYFKQAKYGMYVRMALMIKLLGIQ.

Carbamoyl phosphate is bound by residues Arg-54 and Thr-55. Lys-83 contacts L-aspartate. Carbamoyl phosphate-binding residues include Arg-104, His-132, and Gln-135. Positions 165 and 227 each coordinate L-aspartate. Residues Leu-266 and Pro-267 each contribute to the carbamoyl phosphate site.

It belongs to the aspartate/ornithine carbamoyltransferase superfamily. ATCase family. Heterododecamer (2C3:3R2) of six catalytic PyrB chains organized as two trimers (C3), and six regulatory PyrI chains organized as three dimers (R2).

The catalysed reaction is carbamoyl phosphate + L-aspartate = N-carbamoyl-L-aspartate + phosphate + H(+). It functions in the pathway pyrimidine metabolism; UMP biosynthesis via de novo pathway; (S)-dihydroorotate from bicarbonate: step 2/3. Functionally, catalyzes the condensation of carbamoyl phosphate and aspartate to form carbamoyl aspartate and inorganic phosphate, the committed step in the de novo pyrimidine nucleotide biosynthesis pathway. The polypeptide is Aspartate carbamoyltransferase catalytic subunit (Clostridium kluyveri (strain NBRC 12016)).